The sequence spans 219 residues: Thiopurine S-methyltransferase (219 aa).

Trp10, Leu45, Glu66, and Arg123 together coordinate S-adenosyl-L-methionine.

This sequence belongs to the class I-like SAM-binding methyltransferase superfamily. TPMT family.

The protein resides in the cytoplasm. It catalyses the reaction S-adenosyl-L-methionine + a thiopurine = S-adenosyl-L-homocysteine + a thiopurine S-methylether.. In Shewanella pealeana (strain ATCC 700345 / ANG-SQ1), this protein is Thiopurine S-methyltransferase.